Consider the following 275-residue polypeptide: Large ribosomal subunit protein uL2 (275 aa).

Disordered stretches follow at residues 222–243 (GSVM…PIGR) and 256–275 (GGKT…KRKP).

The protein belongs to the universal ribosomal protein uL2 family. Part of the 50S ribosomal subunit. Forms a bridge to the 30S subunit in the 70S ribosome.

Its function is as follows. One of the primary rRNA binding proteins. Required for association of the 30S and 50S subunits to form the 70S ribosome, for tRNA binding and peptide bond formation. It has been suggested to have peptidyltransferase activity; this is somewhat controversial. Makes several contacts with the 16S rRNA in the 70S ribosome. The polypeptide is Large ribosomal subunit protein uL2 (Syntrophomonas wolfei subsp. wolfei (strain DSM 2245B / Goettingen)).